Reading from the N-terminus, the 128-residue chain is Small ribosomal subunit protein eS8 (128 aa).

The protein belongs to the eukaryotic ribosomal protein eS8 family. Part of the 30S ribosomal subunit.

The chain is Small ribosomal subunit protein eS8 from Methanococcus maripaludis (strain DSM 14266 / JCM 13030 / NBRC 101832 / S2 / LL).